The sequence spans 342 residues: Tetraacyldisaccharide 4'-kinase (342 aa).

68-75 is a binding site for ATP; sequence TVGGTGKT.

It belongs to the LpxK family.

It carries out the reaction a lipid A disaccharide + ATP = a lipid IVA + ADP + H(+). It functions in the pathway glycolipid biosynthesis; lipid IV(A) biosynthesis; lipid IV(A) from (3R)-3-hydroxytetradecanoyl-[acyl-carrier-protein] and UDP-N-acetyl-alpha-D-glucosamine: step 6/6. Functionally, transfers the gamma-phosphate of ATP to the 4'-position of a tetraacyldisaccharide 1-phosphate intermediate (termed DS-1-P) to form tetraacyldisaccharide 1,4'-bis-phosphate (lipid IVA). This Burkholderia cenocepacia (strain ATCC BAA-245 / DSM 16553 / LMG 16656 / NCTC 13227 / J2315 / CF5610) (Burkholderia cepacia (strain J2315)) protein is Tetraacyldisaccharide 4'-kinase.